The following is a 252-amino-acid chain: Trans-aconitate 2-methyltransferase (252 aa).

This sequence belongs to the methyltransferase superfamily. Tam family.

The protein localises to the cytoplasm. It catalyses the reaction trans-aconitate + S-adenosyl-L-methionine = (E)-3-(methoxycarbonyl)pent-2-enedioate + S-adenosyl-L-homocysteine. Its function is as follows. Catalyzes the S-adenosylmethionine monomethyl esterification of trans-aconitate. The sequence is that of Trans-aconitate 2-methyltransferase from Escherichia coli O17:K52:H18 (strain UMN026 / ExPEC).